The primary structure comprises 256 residues: Cell division protein DivIB (256 aa).

Topologically, residues 1–30 are cytoplasmic; that stretch reads MNNSKVIKLQDRVPKLKNQKKKNKKNVNHR. Residues 31–51 form a helical membrane-spanning segment; it reads LILYISILFLLVLFLIYFRSP. At 52–256 the chain is on the extracellular side; sequence LSNIKKISVF…KELGAEEKKE (205 aa). The POTRA domain maps to 53 to 121; sequence SNIKKISVFG…NNIDIHIEEY (69 aa).

It belongs to the FtsQ/DivIB family. DivIB subfamily.

The protein resides in the cell membrane. In terms of biological role, cell division protein that may be involved in stabilizing or promoting the assembly of the division complex. The protein is Cell division protein DivIB of Bacillus cereus (strain ATCC 14579 / DSM 31 / CCUG 7414 / JCM 2152 / NBRC 15305 / NCIMB 9373 / NCTC 2599 / NRRL B-3711).